Reading from the N-terminus, the 64-residue chain is MLKFFLKLRKRRRPVVVPRFVRFIVYVVLFTVAVQRVKQERDAHLRRYEERLQKNRARRRQSFP.

A helical transmembrane segment spans residues 15-37 (VVVPRFVRFIVYVVLFTVAVQRV).

The protein belongs to the HHV-5 US34A protein family.

Its subcellular location is the host membrane. This is an uncharacterized protein from Homo sapiens (Human).